The primary structure comprises 846 residues: Protein kintoun (846 aa).

Disordered stretches follow at residues 1–21 (MSTAAGSRKKHSKLHNEERAD), 377–412 (DSGVELHSNSESPVEDDADGYMPETPELETAAPPDP), 581–657 (HTSI…DSTI), and 743–846 (HDSS…DDEI). Ser-378 carries the phosphoserine modification. Low complexity predominate over residues 399–408 (PETPELETAA). 2 stretches are compositionally biased toward basic residues: residues 596 to 612 (LHKKPSKKQRKRNKKQR) and 750 to 766 (QRKKNQKRRNCKLRAQQ). Residue Ser-770 is modified to Phosphoserine. Basic and acidic residues predominate over residues 821–832 (TRQDHADADAKN).

Belongs to the PIH1 family. Kintoun subfamily. As to quaternary structure, interacts with Pp1alpha-96A, Pp1-87B, Pp1-13C and flw.

It is found in the cytoplasm. Its function is as follows. Required for cytoplasmic pre-assembly of axonemal dyneins, thereby playing a central role in motility in cilia and flagella. Involved in pre-assembly of dynein arm complexes in the cytoplasm before intraflagellar transport loads them for the ciliary compartment. The sequence is that of Protein kintoun from Drosophila pseudoobscura pseudoobscura (Fruit fly).